Consider the following 457-residue polypeptide: Siroheme synthase (457 aa).

Positions 1–204 (MDHLPIFCQL…NDQKAITETT (204 aa)) are precorrin-2 dehydrogenase /sirohydrochlorin ferrochelatase. Residues 22-23 (DV) and 43-44 (LA) each bind NAD(+). A Phosphoserine modification is found at Ser128. Residues 216-457 (GEVVLVGAGP…RDKLNWFSNH (242 aa)) form a uroporphyrinogen-III C-methyltransferase region. Pro225 serves as a coordination point for S-adenosyl-L-methionine. Asp248 serves as the catalytic Proton acceptor. Lys270 acts as the Proton donor in catalysis. S-adenosyl-L-methionine is bound by residues 301 to 303 (GGD), Ile306, 331 to 332 (TA), Met382, and Gly411.

This sequence in the N-terminal section; belongs to the precorrin-2 dehydrogenase / sirohydrochlorin ferrochelatase family. It in the C-terminal section; belongs to the precorrin methyltransferase family.

The catalysed reaction is uroporphyrinogen III + 2 S-adenosyl-L-methionine = precorrin-2 + 2 S-adenosyl-L-homocysteine + H(+). It carries out the reaction precorrin-2 + NAD(+) = sirohydrochlorin + NADH + 2 H(+). The enzyme catalyses siroheme + 2 H(+) = sirohydrochlorin + Fe(2+). The protein operates within cofactor biosynthesis; adenosylcobalamin biosynthesis; precorrin-2 from uroporphyrinogen III: step 1/1. It participates in cofactor biosynthesis; adenosylcobalamin biosynthesis; sirohydrochlorin from precorrin-2: step 1/1. It functions in the pathway porphyrin-containing compound metabolism; siroheme biosynthesis; precorrin-2 from uroporphyrinogen III: step 1/1. Its pathway is porphyrin-containing compound metabolism; siroheme biosynthesis; siroheme from sirohydrochlorin: step 1/1. The protein operates within porphyrin-containing compound metabolism; siroheme biosynthesis; sirohydrochlorin from precorrin-2: step 1/1. Its function is as follows. Multifunctional enzyme that catalyzes the SAM-dependent methylations of uroporphyrinogen III at position C-2 and C-7 to form precorrin-2 via precorrin-1. Then it catalyzes the NAD-dependent ring dehydrogenation of precorrin-2 to yield sirohydrochlorin. Finally, it catalyzes the ferrochelation of sirohydrochlorin to yield siroheme. In Escherichia coli O17:K52:H18 (strain UMN026 / ExPEC), this protein is Siroheme synthase.